A 154-amino-acid chain; its full sequence is Endoribonuclease YbeY (154 aa).

Residues His113, His117, and His123 each contribute to the Zn(2+) site.

It belongs to the endoribonuclease YbeY family. The cofactor is Zn(2+).

The protein localises to the cytoplasm. In terms of biological role, single strand-specific metallo-endoribonuclease involved in late-stage 70S ribosome quality control and in maturation of the 3' terminus of the 16S rRNA. The sequence is that of Endoribonuclease YbeY from Ehrlichia chaffeensis (strain ATCC CRL-10679 / Arkansas).